We begin with the raw amino-acid sequence, 474 residues long: MSDEFVIKPESVSPSSNTSEWPLLLKDYDKLLVRSGHYTPIPAGASPLKRDLKSYISSGVINLDKPSNPSSHEVVAWIKRILRCEKTGHSGTLDPKVTGCLIVCVDRATRLVKSQQGAGKEYVCIVRLHDALKDEKELGRGLENLTGALFQRPPLISAVKRQLRVRTIYDSNLIEFDNKRNLGVFWASCEAGTYMRTLCVHLGMLLGVGGHMQELRRVRSGALSENDNLVTLHDVMDAQWVYDNTRDESYLRKIIQPLETLLVGYKRIVVKDSAVNAVCYGAKLMIPGLLRYEEGIELYDEVVLITTKGEAIAVAIAQMSTVDLATCDHGVVAKVKRCIMERDLYPRRWGLGPIAQKKKQMKADGKLDKYGRANENTPETWKKTYVSLENAEPTTAPASKSEEKPLIKEVEKKEVEQKEESKEESKTPEEKKDKKEKKEKKDKKEKKEKKEKKEKKRKADDDESSEKKKKKSKK.

Aspartate 94 (nucleophile) is an active-site residue. In terms of domain architecture, PUA spans 265 to 340 (YKRIVVKDSA…VVAKVKRCIM (76 aa)). Disordered regions lie at residues 356-375 (QKKKQMKADGKLDKYGRANE) and 390-474 (NAEP…KSKK). Basic and acidic residues-rich tracts occupy residues 361-372 (MKADGKLDKYGR) and 400-433 (KSEEKPLIKEVEKKEVEQKEESKEESKTPEEKKD). Tandem repeats lie at residues 431–433 (KKD), 434–436 (KKE), 437–439 (KKE), 440–442 (KKD), 443–445 (KKE), 446–448 (KKE), 449–451 (KKE), 452–454 (KKE), and 455–457 (KKR). Residues 431–460 (KKDKKEKKEKKDKKEKKEKKEKKEKKRKAD) are 9 X 3 AA tandem repeats of K-K-[DE]. The segment covering 434–456 (KKEKKEKKDKKEKKEKKEKKEKK) has biased composition (basic residues).

It belongs to the pseudouridine synthase TruB family. As to quaternary structure, component of the small nucleolar ribonucleoprotein particles containing H/ACA-type snoRNAs (H/ACA snoRNPs).

The protein localises to the nucleus. It localises to the nucleolus. It catalyses the reaction uridine in 5S rRNA = pseudouridine in 5S rRNA. The enzyme catalyses uridine in snRNA = pseudouridine in snRNA. The catalysed reaction is a uridine in mRNA = a pseudouridine in mRNA. Functionally, catalytic subunit of H/ACA small nucleolar ribonucleoprotein (H/ACA snoRNP) complex, which catalyzes pseudouridylation of rRNA. This involves the isomerization of uridine such that the ribose is subsequently attached to C5, instead of the normal N1. Pseudouridine ('psi') residues may serve to stabilize the conformation of rRNAs and play a central role in ribosomal RNA processing. The H/ACA snoRNP complex also mediates pseudouridylation of other types of RNAs. Catalyzes pseudouridylation at position 93 in U2 snRNA. Also catalyzes pseudouridylation of mRNAs; H/ACA-type snoRNAs probably guide pseudouridylation of mRNAs. The chain is H/ACA ribonucleoprotein complex subunit CBF5 (CBF5) from Kluyveromyces lactis (strain ATCC 8585 / CBS 2359 / DSM 70799 / NBRC 1267 / NRRL Y-1140 / WM37) (Yeast).